A 391-amino-acid polypeptide reads, in one-letter code: Phosphoglycerate kinase (391 aa).

Residues 21–23 (DLN), Arg-36, 59–62 (HLGR), Arg-113, and Arg-146 contribute to the substrate site. Residues Lys-197, Glu-319, and 345 to 348 (GGDT) each bind ATP.

Belongs to the phosphoglycerate kinase family. As to quaternary structure, monomer.

It is found in the cytoplasm. The enzyme catalyses (2R)-3-phosphoglycerate + ATP = (2R)-3-phospho-glyceroyl phosphate + ADP. The protein operates within carbohydrate degradation; glycolysis; pyruvate from D-glyceraldehyde 3-phosphate: step 2/5. The chain is Phosphoglycerate kinase from Shewanella baltica (strain OS185).